The chain runs to 140 residues: Lymphocyte antigen 6L (140 aa).

Positions 1–20 (MAPLLLVLWASLVSMELTGG) are cleaved as a signal peptide. Positions 31 to 124 (LSCFECFKVL…GSWEGFWSLP (94 aa)) constitute a UPAR/Ly6 domain. 2 cysteine pairs are disulfide-bonded: Cys-33-Cys-50 and Cys-105-Cys-110. The GPI-anchor amidated serine moiety is linked to residue Ser-116. Positions 117-140 (WEGFWSLPGRLLLPMGLGLFCTLL) are cleaved as a propeptide — removed in mature form.

The protein resides in the cell membrane. The polypeptide is Lymphocyte antigen 6L (Mus musculus (Mouse)).